We begin with the raw amino-acid sequence, 121 residues long: Large ribosomal subunit protein bL17 (121 aa).

The protein belongs to the bacterial ribosomal protein bL17 family. As to quaternary structure, part of the 50S ribosomal subunit. Contacts protein L32.

In Rubrobacter xylanophilus (strain DSM 9941 / JCM 11954 / NBRC 16129 / PRD-1), this protein is Large ribosomal subunit protein bL17.